The sequence spans 219 residues: Ribose-5-phosphate isomerase A (219 aa).

Residues 28–31 (TGST), 81–84 (DGAD), and 94–97 (KGGG) each bind substrate. The Proton acceptor role is filled by Glu-103. Lys-121 lines the substrate pocket.

Belongs to the ribose 5-phosphate isomerase family. Homodimer.

The enzyme catalyses aldehydo-D-ribose 5-phosphate = D-ribulose 5-phosphate. Its pathway is carbohydrate degradation; pentose phosphate pathway; D-ribose 5-phosphate from D-ribulose 5-phosphate (non-oxidative stage): step 1/1. Functionally, catalyzes the reversible conversion of ribose-5-phosphate to ribulose 5-phosphate. In Escherichia fergusonii (strain ATCC 35469 / DSM 13698 / CCUG 18766 / IAM 14443 / JCM 21226 / LMG 7866 / NBRC 102419 / NCTC 12128 / CDC 0568-73), this protein is Ribose-5-phosphate isomerase A.